The primary structure comprises 116 residues: Flagellar transcriptional regulator FlhD (116 aa).

This sequence belongs to the FlhD family. In terms of assembly, homodimer; disulfide-linked. Forms a heterohexamer composed of two FlhC and four FlhD subunits. Each FlhC binds a FlhD dimer, forming a heterotrimer, and a hexamer assembles by dimerization of two heterotrimers.

It is found in the cytoplasm. Functionally, functions in complex with FlhC as a master transcriptional regulator that regulates transcription of several flagellar and non-flagellar operons by binding to their promoter region. Activates expression of class 2 flagellar genes, including fliA, which is a flagellum-specific sigma factor that turns on the class 3 genes. Also regulates genes whose products function in a variety of physiological pathways. The polypeptide is Flagellar transcriptional regulator FlhD (Pectobacterium carotovorum subsp. carotovorum (strain PC1)).